The chain runs to 507 residues: ATP synthase subunit alpha, chloroplastic (507 aa).

170–177 lines the ATP pocket; it reads GDRQTGKT. Thr257 is modified (phosphothreonine).

It belongs to the ATPase alpha/beta chains family. F-type ATPases have 2 components, CF(1) - the catalytic core - and CF(0) - the membrane proton channel. CF(1) has five subunits: alpha(3), beta(3), gamma(1), delta(1), epsilon(1). CF(0) has four main subunits: a, b, b' and c.

It is found in the plastid. Its subcellular location is the chloroplast thylakoid membrane. It catalyses the reaction ATP + H2O + 4 H(+)(in) = ADP + phosphate + 5 H(+)(out). Its function is as follows. Produces ATP from ADP in the presence of a proton gradient across the membrane. The alpha chain is a regulatory subunit. The protein is ATP synthase subunit alpha, chloroplastic of Lobularia maritima (Sweet alyssum).